The sequence spans 207 residues: Small ribosomal subunit protein uS4c (207 aa).

One can recognise an S4 RNA-binding domain in the interval 92-156 (MRLDNILFRL…YQSIITKRIE (65 aa)).

The protein belongs to the universal ribosomal protein uS4 family. In terms of assembly, part of the 30S ribosomal subunit. Contacts protein S5. The interaction surface between S4 and S5 is involved in control of translational fidelity.

The protein resides in the plastid. It localises to the chloroplast. One of the primary rRNA binding proteins, it binds directly to 16S rRNA where it nucleates assembly of the body of the 30S subunit. Its function is as follows. With S5 and S12 plays an important role in translational accuracy. The chain is Small ribosomal subunit protein uS4c (rps4) from Equisetum palustre (Marsh horsetail).